The sequence spans 261 residues: uncharacterized protein (261 aa).

An N-terminal signal peptide occupies residues 1-22; sequence MGYSKRFALYISVMILIFAIAG. The N-palmitoyl cysteine moiety is linked to residue Cys-23. Cys-23 is lipidated: S-diacylglycerol cysteine.

Belongs to the staphylococcal tandem lipoprotein family.

Its subcellular location is the cell membrane. This is an uncharacterized protein from Staphylococcus aureus (strain N315).